Consider the following 253-residue polypeptide: MSFTVVIPARYGSSRLPGKPLADIAGKPMIQHVVERAEASGAAEVIVATDDMRIKEGVDKFGGRVMMTSSEHSSGTERLAEVIEQLALAENEVVVNVQGDEPFIPPEIIRQVADNLANQRQAPMATLAVPITDAEDIFNPNTVKVVTDAAGYALYFSRAAIPWDREHFSADRATNVVTEHYHRHIGIYAYRAGFVRRYIEWEPSPIEQLESLEQLRVLWHGERIHVAEAILAPATGIDTEEDLQRARKLAGDG.

It belongs to the KdsB family.

The protein localises to the cytoplasm. The catalysed reaction is 3-deoxy-alpha-D-manno-oct-2-ulosonate + CTP = CMP-3-deoxy-beta-D-manno-octulosonate + diphosphate. It participates in nucleotide-sugar biosynthesis; CMP-3-deoxy-D-manno-octulosonate biosynthesis; CMP-3-deoxy-D-manno-octulosonate from 3-deoxy-D-manno-octulosonate and CTP: step 1/1. Its pathway is bacterial outer membrane biogenesis; lipopolysaccharide biosynthesis. Activates KDO (a required 8-carbon sugar) for incorporation into bacterial lipopolysaccharide in Gram-negative bacteria. In Idiomarina loihiensis (strain ATCC BAA-735 / DSM 15497 / L2-TR), this protein is 3-deoxy-manno-octulosonate cytidylyltransferase.